The chain runs to 232 residues: UPF0177 protein in abiGi 5'region (232 aa).

Transmembrane regions (helical) follow at residues 12–32, 47–67, 86–106, 124–144, 165–185, and 206–226; these read YLSL…ILAY, VVAT…GILI, LLFL…SYTY, SIQI…APIF, IVSC…LIVY, and ILVH…LQVI.

It belongs to the UPF0177 family.

Its subcellular location is the cell membrane. Functionally, the function of this protein is currently unknown, but it has been shown that it is not necessary for phage resistance. The polypeptide is UPF0177 protein in abiGi 5'region (Lactococcus lactis subsp. cremoris (Streptococcus cremoris)).